Reading from the N-terminus, the 227-residue chain is MIRLILTDVDGTLTFDRDTYNIDLDAVDLLRKVEKKGIKVGLVSGNSYPVLRALYTYFGFNGGIVAENGCIVYYDNQLKEVCERVERSLISEFENRFGVKGSWQNQFKVCDFSFYPPILKDEMVKWALDKGLYIKTSGYAVHISKSKRGKAEGVRELIKMHGLDKAEVVGIGDSSTDIEFLEEVGIRVVVGNADESLKSIGDFVMREKSGKAVVEFIKKVITGEINE.

Asp-8 serves as the catalytic Nucleophile. Residues Asp-8 and Asp-10 each coordinate Mg(2+). Lys-150 contacts substrate. Asp-173 and Asp-177 together coordinate Mg(2+).

The protein belongs to the archaeal SPP-like hydrolase family. It depends on Mg(2+) as a cofactor.

The catalysed reaction is 2-phosphoglycolate + H2O = glycolate + phosphate. In terms of biological role, catalyzes the dephosphorylation of 2-phosphoglycolate. This chain is Phosphoglycolate phosphatase, found in Sulfolobus acidocaldarius (strain ATCC 33909 / DSM 639 / JCM 8929 / NBRC 15157 / NCIMB 11770).